We begin with the raw amino-acid sequence, 416 residues long: Putative pseudouridine transporter (416 aa).

Over 1 to 2 (MD) the chain is Periplasmic. The chain crosses the membrane as a helical span at residues 3–23 (IMRSVVGMVVLLAIAFLLSVN). The Cytoplasmic portion of the chain corresponds to 24–31 (KKSISLRT). Residues 32 to 52 (VGAALLLQIAIGGIMLYFPPG) traverse the membrane as a helical segment. Residues 53 to 104 (KWAVEQAALGVHKVMSYSDAGSAFIFGSLVGPKMDVLFDGAGFIFAFRVLPA) lie on the Periplasmic side of the membrane. The chain crosses the membrane as a helical span at residues 105 to 125 (IIFVTALISLLYYIGVMGLLI). Topologically, residues 126–172 (RILGSIFQKALNISKIESFVAVTTIFLGQNEIPAIVKPFIDRMNRNE) are cytoplasmic. The chain crosses the membrane as a helical span at residues 173 to 193 (LFTAICSGMASIAGSMMIGYA). The Periplasmic segment spans residues 194–196 (GMG). The helical transmembrane segment at 197–217 (VPIDYLLAASLMAIPGGILFA) threads the bilayer. Over 218-268 (RILSPATEPSQVTFENLSFSETPPKSFIEAAASGAMTGLKIAAGVATVVMA) the chain is Cytoplasmic. A helical membrane pass occupies residues 269–289 (FVAIIALINGIIGGIGGWFGF). The Periplasmic portion of the chain corresponds to 290 to 352 (ANASLESIFG…QTGGTLEVKT (63 aa)). Residues 353-373 (IAIISFALCGFANFGSIGVVV) traverse the membrane as a helical segment. Residues 374 to 394 (GAFSAISPKRAPEIAQLGLRA) are Cytoplasmic-facing. A helical membrane pass occupies residues 395–415 (LAAATLSNLMSATIAGFFIGL). Alanine 416 is a topological domain (periplasmic).

It belongs to the concentrative nucleoside transporter (CNT) (TC 2.A.41) family.

It is found in the cell inner membrane. In terms of biological role, could be involved in pseudouridine transport. The chain is Putative pseudouridine transporter (psuT) from Escherichia coli (strain K12).